Reading from the N-terminus, the 81-residue chain is Sulfur carrier protein TusA (81 aa).

Residue Cys-19 is the Cysteine persulfide intermediate of the active site.

This sequence belongs to the sulfur carrier protein TusA family. As to quaternary structure, interacts with IscS.

The protein localises to the cytoplasm. The protein operates within tRNA modification. In terms of biological role, sulfur carrier protein involved in sulfur trafficking in the cell. Part of a sulfur-relay system required for 2-thiolation during synthesis of 2-thiouridine of the modified wobble base 5-methylaminomethyl-2-thiouridine (mnm(5)s(2)U) in tRNA. Interacts with IscS and stimulates its cysteine desulfurase activity. Accepts an activated sulfur from IscS, which is then transferred to TusD, and thus determines the direction of sulfur flow from IscS to 2-thiouridine formation. Also appears to be involved in sulfur transfer for the biosynthesis of molybdopterin. This Salmonella choleraesuis (strain SC-B67) protein is Sulfur carrier protein TusA.